The primary structure comprises 203 residues: Linker for activation of T-cells family member 2 (203 aa).

Topologically, residues 1 to 6 (MSAELE) are extracellular. The chain crosses the membrane as a helical; Signal-anchor for type III membrane protein span at residues 7–27 (LLWPVSGLLLLLLGATAWLCV). Residues Cys26 and Cys29 are each lipidated (S-palmitoyl cysteine). The Cytoplasmic segment spans residues 28-203 (HCSRPGVKRN…NGDVAAAENI (176 aa)). Tyr59 is subject to Phosphotyrosine. A phosphoserine mark is found at Ser60 and Ser95. A phosphotyrosine mark is found at Tyr139, Tyr160, and Tyr192. Residues 171 to 203 (ESKRTMGAPMSLSGSPDEEPDYVNGDVAAAENI) form a disordered region.

In terms of assembly, when phosphorylated, interacts with GRB2. May also interact with SOS1, GAB1 and CBL. Phosphorylated on tyrosines following cross-linking of BCR in B-cells, high affinity IgG receptor (FCGR1) in myeloid cells, or high affinity IgE receptor (FCER1) in mast cells; which induces the recruitment of GRB2. As to expression, strongly expressed in testis. Expressed in heart, spleen and lung. Present in B-cells and mast cells (at protein level).

It localises to the cell membrane. Its function is as follows. Involved in FCER1 (high affinity immunoglobulin epsilon receptor)-mediated signaling in mast cells. May also be involved in BCR (B-cell antigen receptor)-mediated signaling in B-cells and FCGR1 (high affinity immunoglobulin gamma Fc receptor I)-mediated signaling in myeloid cells. Couples activation of these receptors and their associated kinases with distal intracellular events through the recruitment of GRB2. The polypeptide is Linker for activation of T-cells family member 2 (Lat2) (Mus musculus (Mouse)).